Consider the following 358-residue polypeptide: Chorismate synthase (358 aa).

Arginine 46 is a binding site for NADP(+). FMN is bound by residues 123-125 (RSS), 235-236 (NA), glycine 275, 290-294 (KATPS), and arginine 316.

The protein belongs to the chorismate synthase family. Homotetramer. It depends on FMNH2 as a cofactor.

The enzyme catalyses 5-O-(1-carboxyvinyl)-3-phosphoshikimate = chorismate + phosphate. Its pathway is metabolic intermediate biosynthesis; chorismate biosynthesis; chorismate from D-erythrose 4-phosphate and phosphoenolpyruvate: step 7/7. In terms of biological role, catalyzes the anti-1,4-elimination of the C-3 phosphate and the C-6 proR hydrogen from 5-enolpyruvylshikimate-3-phosphate (EPSP) to yield chorismate, which is the branch point compound that serves as the starting substrate for the three terminal pathways of aromatic amino acid biosynthesis. This reaction introduces a second double bond into the aromatic ring system. This chain is Chorismate synthase, found in Aliarcobacter butzleri (strain RM4018) (Arcobacter butzleri).